Reading from the N-terminus, the 201-residue chain is Extracellular superoxide dismutase [Cu-Zn] (201 aa).

An N-terminal signal peptide occupies residues 1-42 (MINSFIVIFLSFLIFINYANLVCVEATHVYGRRSHSNGMHGN). 3 residues coordinate Cu cation: His89, His91, and His106. Residues Cys100 and Cys192 are joined by a disulfide bond. Zn(2+)-binding residues include His106, His114, His123, and Asp126. Residue His163 participates in Cu cation binding.

It belongs to the Cu-Zn superoxide dismutase family. In terms of assembly, homodimer. Cu cation is required as a cofactor. The cofactor is Zn(2+).

Its subcellular location is the secreted. The protein localises to the extracellular space. It catalyses the reaction 2 superoxide + 2 H(+) = H2O2 + O2. Destroys radicals which are normally produced within the cells and which are toxic to biological systems. May act in the parasite defense against phagocyte-generated reactive oxygen species. In Onchocerca volvulus, this protein is Extracellular superoxide dismutase [Cu-Zn] (sod-4).